The chain runs to 801 residues: Triacylglycerol lipase SDP1L (801 aa).

A glycan (N-linked (GlcNAc...) asparagine) is linked at Asn-130. Transmembrane regions (helical) follow at residues 232–249 (ALLLSGGASLGAFHLGVV) and 261–277 (IIAGSSVGSVMCAVVGT). A PNPLA domain is found at 233–436 (LLLSGGASLG…EMDLPMIQLK (204 aa)). The GXSXG signature appears at 264-268 (GSSVG). Catalysis depends on Ser-266, which acts as the Nucleophile. Residues Asn-328 and Asn-332 are each glycosylated (N-linked (GlcNAc...) asparagine). Asp-423 functions as the Proton acceptor in the catalytic mechanism. Residues Asn-605, Asn-620, Asn-649, Asn-653, Asn-708, and Asn-759 are each glycosylated (N-linked (GlcNAc...) asparagine). The interval 648 to 675 (SNRTSNLSHTYDAGSECDSPEAEDWTRS) is disordered. Residues 750 to 801 (MNSEPEDSQNESEIPETPESVQLDSPEKDIIDGESSASEDGDAQANLIHDHE) form a disordered region. Acidic residues predominate over residues 753 to 765 (EPEDSQNESEIPE).

As to expression, highly expressed in mature pollen.

Its subcellular location is the lipid droplet. It localises to the membrane. It carries out the reaction a triacylglycerol + H2O = a diacylglycerol + a fatty acid + H(+). Functionally, may be involved in the release of fatty acids from the oil body in germinating seedlings. Can hydrolyze triacylglycerols in vitro. The chain is Triacylglycerol lipase SDP1L from Arabidopsis thaliana (Mouse-ear cress).